Reading from the N-terminus, the 204-residue chain is UPF0056 membrane protein TC_0241 (204 aa).

The next 6 helical transmembrane spans lie at 8-28 (LTLLFYALFNSLGSLPVFVAL), 46-66 (IFALLTLILFITFGQGFFRLL), 68-88 (VSLPAFQLTGGILLGSLAINM), 107-127 (IFYPLAFPVITGPATITSTLG), 138-158 (LVLGAIMLAWAFSLITLFFSS), and 176-196 (FGISLALMAGNLMLKAISTAF).

It belongs to the UPF0056 (MarC) family.

It localises to the cell membrane. The sequence is that of UPF0056 membrane protein TC_0241 from Chlamydia muridarum (strain MoPn / Nigg).